Reading from the N-terminus, the 307-residue chain is Serine/threonine-protein phosphatase PP2A-3 catalytic subunit (307 aa).

Residues Asp55, His57, Asp83, and Asn115 each coordinate Mn(2+). His116 acts as the Proton donor in catalysis. Mn(2+) is bound by residues His165 and His239.

The protein belongs to the PPP phosphatase family. PP-2A subfamily. It depends on Mn(2+) as a cofactor.

It localises to the cytoplasm. It carries out the reaction O-phospho-L-seryl-[protein] + H2O = L-seryl-[protein] + phosphate. The catalysed reaction is O-phospho-L-threonyl-[protein] + H2O = L-threonyl-[protein] + phosphate. The polypeptide is Serine/threonine-protein phosphatase PP2A-3 catalytic subunit (PP2A3) (Oryza sativa subsp. indica (Rice)).